Here is a 220-residue protein sequence, read N- to C-terminus: Vesicle-associated protein 2-1 (220 aa).

Met-1 bears the N-acetylmethionine mark. Over 1-196 the chain is Cytoplasmic; that stretch reads MTGVGENQLI…RNSGNGLSLK (196 aa). Thr-2 carries the post-translational modification N-acetylthreonine; in Vesicle-associated protein 2-1, N-terminally processed. The region spanning 9–129 is the MSP domain; sequence LISIQPDELK…TECKLKVSYI (121 aa). The disordered stretch occupies residues 133–154; that stretch reads TTQRSSESGATNGDGQSSETIS. Residues 153 to 188 adopt a coiled-coil conformation; that stretch reads ISTIQRLKEERDAAVKQTQQLQHELETVRRRRNQRN. Residues 197–217 form a helical; Anchor for type IV membrane protein membrane-spanning segment; that stretch reads LAAMVGLIGLIIGFILKLTLA.

This sequence belongs to the VAMP-associated protein (VAP) (TC 9.B.17) family.

The protein localises to the endoplasmic reticulum membrane. Its function is as follows. May play a role in vesicle trafficking. This Arabidopsis thaliana (Mouse-ear cress) protein is Vesicle-associated protein 2-1 (PVA21).